We begin with the raw amino-acid sequence, 336 residues long: Dihydroorotate dehydrogenase (quinone) (336 aa).

FMN contacts are provided by residues 62-66 (AGLDK) and Thr86. Residue Lys66 coordinates substrate. Residue 111-115 (NRMGF) participates in substrate binding. Residues Asn139 and Asn172 each contribute to the FMN site. Asn172 contributes to the substrate binding site. Ser175 serves as the catalytic Nucleophile. Residue Asn177 participates in substrate binding. FMN contacts are provided by Lys217 and Thr245. 246 to 247 (NT) lines the substrate pocket. Residues Gly268, Gly297, and 318-319 (YS) contribute to the FMN site.

The protein belongs to the dihydroorotate dehydrogenase family. Type 2 subfamily. As to quaternary structure, monomer. FMN serves as cofactor.

It is found in the cell membrane. The catalysed reaction is (S)-dihydroorotate + a quinone = orotate + a quinol. The protein operates within pyrimidine metabolism; UMP biosynthesis via de novo pathway; orotate from (S)-dihydroorotate (quinone route): step 1/1. In terms of biological role, catalyzes the conversion of dihydroorotate to orotate with quinone as electron acceptor. This is Dihydroorotate dehydrogenase (quinone) from Aeromonas hydrophila subsp. hydrophila (strain ATCC 7966 / DSM 30187 / BCRC 13018 / CCUG 14551 / JCM 1027 / KCTC 2358 / NCIMB 9240 / NCTC 8049).